The chain runs to 180 residues: Large ribosomal subunit protein uL5 (180 aa).

It belongs to the universal ribosomal protein uL5 family. Part of the 50S ribosomal subunit; part of the 5S rRNA/L5/L18/L25 subcomplex. Contacts the 5S rRNA and the P site tRNA. Forms a bridge to the 30S subunit in the 70S ribosome.

In terms of biological role, this is one of the proteins that bind and probably mediate the attachment of the 5S RNA into the large ribosomal subunit, where it forms part of the central protuberance. In the 70S ribosome it contacts protein S13 of the 30S subunit (bridge B1b), connecting the 2 subunits; this bridge is implicated in subunit movement. Contacts the P site tRNA; the 5S rRNA and some of its associated proteins might help stabilize positioning of ribosome-bound tRNAs. The chain is Large ribosomal subunit protein uL5 from Clostridium acetobutylicum (strain ATCC 824 / DSM 792 / JCM 1419 / IAM 19013 / LMG 5710 / NBRC 13948 / NRRL B-527 / VKM B-1787 / 2291 / W).